Reading from the N-terminus, the 152-residue chain is Proteolipid protein 2 (152 aa).

One can recognise an MARVEL domain in the interval 19–137 (FSRTRKGILL…DAYFTFPLRQ (119 aa)). Transmembrane regions (helical) follow at residues 25-45 (GILLLAEIILCLVILICFSAG), 48-68 (GYSSLSVVEMVLAIVFFVIYM), and 85-105 (FFRTLIAAILYLITSIFVLVE). The N-linked (GlcNAc...) asparagine glycan is linked to asparagine 108. The chain crosses the membrane as a helical span at residues 112–132 (IAAGVLGLLATCLFGYDAYFT).

The protein localises to the membrane. Its function is as follows. May play a role in cell differentiation in the intestinal epithelium. The chain is Proteolipid protein 2 (PLP2) from Oryctolagus cuniculus (Rabbit).